A 173-amino-acid polypeptide reads, in one-letter code: Flagellar assembly factor FliW (173 aa).

Residues 152 to 173 are disordered; the sequence is STTVRRKASPPAAGEDKGDVQE.

It belongs to the FliW family. Interacts with translational regulator CsrA and flagellin(s).

The protein localises to the cytoplasm. Its function is as follows. Acts as an anti-CsrA protein, binds CsrA and prevents it from repressing translation of its target genes, one of which is flagellin. Binds to flagellin and participates in the assembly of the flagellum. This is Flagellar assembly factor FliW from Nitratidesulfovibrio vulgaris (strain ATCC 29579 / DSM 644 / CCUG 34227 / NCIMB 8303 / VKM B-1760 / Hildenborough) (Desulfovibrio vulgaris).